We begin with the raw amino-acid sequence, 339 residues long: DNA-directed RNA polymerase subunit alpha (339 aa).

Residues 1 to 233 form an alpha N-terminal domain (alpha-NTD) region; sequence MVREEVAGST…DLFLPFLHAE (233 aa). Residues 264-339 form an alpha C-terminal domain (alpha-CTD) region; sequence KKGIPLNCIF…IDLLKNKLSF (76 aa).

The protein belongs to the RNA polymerase alpha chain family. As to quaternary structure, in plastids the minimal PEP RNA polymerase catalytic core is composed of four subunits: alpha, beta, beta', and beta''. When a (nuclear-encoded) sigma factor is associated with the core the holoenzyme is formed, which can initiate transcription.

It is found in the plastid. The protein localises to the chloroplast. It catalyses the reaction RNA(n) + a ribonucleoside 5'-triphosphate = RNA(n+1) + diphosphate. Functionally, DNA-dependent RNA polymerase catalyzes the transcription of DNA into RNA using the four ribonucleoside triphosphates as substrates. This is DNA-directed RNA polymerase subunit alpha from Festucopsis serpentini.